A 316-amino-acid chain; its full sequence is DNA-directed RNA polymerase subunit alpha (316 aa).

The tract at residues Met1–Ser232 is alpha N-terminal domain (alpha-NTD). The tract at residues Lys247–Tyr316 is alpha C-terminal domain (alpha-CTD).

Belongs to the RNA polymerase alpha chain family. In plastids the minimal PEP RNA polymerase catalytic core is composed of four subunits: alpha, beta, beta', and beta''. When a (nuclear-encoded) sigma factor is associated with the core the holoenzyme is formed, which can initiate transcription.

It localises to the plastid. Its subcellular location is the chloroplast. It catalyses the reaction RNA(n) + a ribonucleoside 5'-triphosphate = RNA(n+1) + diphosphate. Its function is as follows. DNA-dependent RNA polymerase catalyzes the transcription of DNA into RNA using the four ribonucleoside triphosphates as substrates. This is DNA-directed RNA polymerase subunit alpha from Mesostigma viride (Green alga).